The sequence spans 252 residues: Probable 6-phosphogluconolactonase 5 (252 aa).

It belongs to the glucosamine/galactosamine-6-phosphate isomerase family. 6-phosphogluconolactonase subfamily.

The protein localises to the cytoplasm. It localises to the cytosol. It catalyses the reaction 6-phospho-D-glucono-1,5-lactone + H2O = 6-phospho-D-gluconate + H(+). It participates in carbohydrate degradation; pentose phosphate pathway; D-ribulose 5-phosphate from D-glucose 6-phosphate (oxidative stage): step 2/3. Catalyzes the hydrolysis of 6-phosphogluconolactone to 6-phosphogluconate. This Arabidopsis thaliana (Mouse-ear cress) protein is Probable 6-phosphogluconolactonase 5.